Consider the following 642-residue polypeptide: Putative ATP-binding protein YdiF (642 aa).

2 consecutive ABC transporter domains span residues 4–259 and 327–541; these read LQVN…EKDL and LRVQ…ELEK. ATP is bound by residues 36-43 and 360-367; these read GRNGAGKS and GPNGIGKS. Basic and acidic residues-rich tracts occupy residues 541–550 and 557–567; these read KMNQQEETDK and SDSKRSYEEEK. The segment at 541 to 567 is disordered; sequence KMNQQEETDKTPATVKSDSKRSYEEEK.

Belongs to the ABC transporter superfamily. ABCF family. YdiF subfamily.

This Bacillus subtilis (strain 168) protein is Putative ATP-binding protein YdiF (ydiF).